We begin with the raw amino-acid sequence, 162 residues long: Ribosomal RNA large subunit methyltransferase H (162 aa).

Residue Gly108 coordinates S-adenosyl-L-methionine.

This sequence belongs to the RNA methyltransferase RlmH family. Homodimer.

It localises to the cytoplasm. It carries out the reaction pseudouridine(1915) in 23S rRNA + S-adenosyl-L-methionine = N(3)-methylpseudouridine(1915) in 23S rRNA + S-adenosyl-L-homocysteine + H(+). Its function is as follows. Specifically methylates the pseudouridine at position 1915 (m3Psi1915) in 23S rRNA. This is Ribosomal RNA large subunit methyltransferase H from Methylobacterium nodulans (strain LMG 21967 / CNCM I-2342 / ORS 2060).